The primary structure comprises 61 residues: Metallothionein-1 (61 aa).

Met-1 carries the post-translational modification N-acetylmethionine. The interval 1–29 (MDPNCSCPTGGSCTCAGSCKCKACRCPSC) is beta. A divalent metal cation contacts are provided by Cys-5, Cys-7, Cys-13, Cys-15, Cys-19, Cys-21, Cys-24, Cys-26, Cys-29, Cys-33, Cys-34, Cys-36, Cys-37, Cys-41, Cys-44, Cys-48, Cys-50, Cys-57, Cys-59, and Cys-60. The segment at 30 to 61 (KKSCCSCCPVGCAKCAQGCVCKGASDKCSCCA) is alpha.

This sequence belongs to the metallothionein superfamily. Type 1 family. As to quaternary structure, monomer.

Metallothioneins have a high content of cysteine residues that bind various heavy metals; these proteins are transcriptionally regulated by both heavy metals and glucocorticoids. The chain is Metallothionein-1 (MT1) from Bos taurus (Bovine).